The primary structure comprises 81 residues: Sulfur carrier protein TusA (81 aa).

Residue C19 is the Cysteine persulfide intermediate of the active site.

The protein belongs to the sulfur carrier protein TusA family. In terms of assembly, interacts with IscS.

It is found in the cytoplasm. Its pathway is tRNA modification. Sulfur carrier protein involved in sulfur trafficking in the cell. Part of a sulfur-relay system required for 2-thiolation during synthesis of 2-thiouridine of the modified wobble base 5-methylaminomethyl-2-thiouridine (mnm(5)s(2)U) in tRNA. Interacts with IscS and stimulates its cysteine desulfurase activity. Accepts an activated sulfur from IscS, which is then transferred to TusD, and thus determines the direction of sulfur flow from IscS to 2-thiouridine formation. Also appears to be involved in sulfur transfer for the biosynthesis of molybdopterin. This is Sulfur carrier protein TusA from Escherichia coli (strain SMS-3-5 / SECEC).